The sequence spans 247 residues: Acidic leucine-rich nuclear phosphoprotein 32 family member A (247 aa).

T15 is subject to Phosphothreonine. At S17 the chain carries Phosphoserine. 4 LRR repeats span residues D18–F41, E43–N64, K65–C87, and N89–K110. The region spanning C123 to E161 is the LRRCT domain. The necessary for tumor-suppressive function stretch occupies residues R150–E172. The tract at residues R150 to D247 is disordered. Over residues D157–E230 the composition is skewed to acidic residues. 2 positions are modified to phosphoserine: S158 and S202. The tract at residues E165–D247 is interaction with E4F1.

This sequence belongs to the ANP32 family. As to quaternary structure, component of the SET complex, composed of at least ANP32A, APEX1, HMGB2, NME1, SET and TREX1. Directly interacts with SET. Interacts with ATXN1/SCA1. Interacts with MAP1B. Interacts with ELAVL1. Part of the INHAT (inhibitor of histone acetyltransferases) complex. Interacts with E4F1. Phosphorylated on serine residues, at least in part by casein kinase 2/CK2. Post-translationally, some glutamate residues are glycylated by TTLL8. This modification occurs exclusively on glutamate residues and results in a glycine chain on the gamma-carboxyl group. Widely distributed in the central nervous system, with an abundant expression in the cerebellum.

The protein resides in the nucleus. It is found in the cytoplasm. It localises to the endoplasmic reticulum. Its function is as follows. Multifunctional protein that is involved in the regulation of many processes including tumor suppression, apoptosis, cell cycle progression or transcription. Promotes apoptosis by favouring the activation of caspase-9/CASP9 and allowing apoptosome formation. In addition, plays a role in the modulation of histone acetylation and transcription as part of the INHAT (inhibitor of histone acetyltransferases) complex. Inhibits the histone-acetyltranferase activity of EP300/CREBBP (CREB-binding protein) and EP300/CREBBP-associated factor by histone masking. Preferentially binds to unmodified histone H3 and sterically inhibiting its acetylation and phosphorylation leading to cell growth inhibition. Participates in other biochemical processes such as regulation of mRNA nuclear-to-cytoplasmic translocation and stability by its association with ELAVL1 (Hu-antigen R). Plays a role in E4F1-mediated transcriptional repression as well as inhibition of protein phosphatase 2A. In Rattus norvegicus (Rat), this protein is Acidic leucine-rich nuclear phosphoprotein 32 family member A (Anp32a).